A 211-amino-acid polypeptide reads, in one-letter code: Urease accessory protein UreF (211 aa).

Residues 71-93 (DDADRETDARTPAPAARHASRSQ) form a disordered region.

The protein belongs to the UreF family. As to quaternary structure, ureD, UreF and UreG form a complex that acts as a GTP-hydrolysis-dependent molecular chaperone, activating the urease apoprotein by helping to assemble the nickel containing metallocenter of UreC. The UreE protein probably delivers the nickel.

It localises to the cytoplasm. Required for maturation of urease via the functional incorporation of the urease nickel metallocenter. The polypeptide is Urease accessory protein UreF (Mycobacterium tuberculosis (strain ATCC 25177 / H37Ra)).